A 100-amino-acid chain; its full sequence is Aspartyl/glutamyl-tRNA(Asn/Gln) amidotransferase subunit C (100 aa).

This sequence belongs to the GatC family. As to quaternary structure, heterotrimer of A, B and C subunits.

It catalyses the reaction L-glutamyl-tRNA(Gln) + L-glutamine + ATP + H2O = L-glutaminyl-tRNA(Gln) + L-glutamate + ADP + phosphate + H(+). The enzyme catalyses L-aspartyl-tRNA(Asn) + L-glutamine + ATP + H2O = L-asparaginyl-tRNA(Asn) + L-glutamate + ADP + phosphate + 2 H(+). Allows the formation of correctly charged Asn-tRNA(Asn) or Gln-tRNA(Gln) through the transamidation of misacylated Asp-tRNA(Asn) or Glu-tRNA(Gln) in organisms which lack either or both of asparaginyl-tRNA or glutaminyl-tRNA synthetases. The reaction takes place in the presence of glutamine and ATP through an activated phospho-Asp-tRNA(Asn) or phospho-Glu-tRNA(Gln). This Streptococcus sanguinis (strain SK36) protein is Aspartyl/glutamyl-tRNA(Asn/Gln) amidotransferase subunit C.